The chain runs to 94 residues: Large ribosomal subunit protein bL25 (94 aa).

Belongs to the bacterial ribosomal protein bL25 family. Part of the 50S ribosomal subunit; part of the 5S rRNA/L5/L18/L25 subcomplex. Contacts the 5S rRNA. Binds to the 5S rRNA independently of L5 and L18.

This is one of the proteins that binds to the 5S RNA in the ribosome where it forms part of the central protuberance. The protein is Large ribosomal subunit protein bL25 of Escherichia coli O157:H7.